The following is a 476-amino-acid chain: Glycogen synthase (476 aa).

K15 serves as a coordination point for ADP-alpha-D-glucose.

This sequence belongs to the glycosyltransferase 1 family. Bacterial/plant glycogen synthase subfamily.

The enzyme catalyses [(1-&gt;4)-alpha-D-glucosyl](n) + ADP-alpha-D-glucose = [(1-&gt;4)-alpha-D-glucosyl](n+1) + ADP + H(+). It functions in the pathway glycan biosynthesis; glycogen biosynthesis. In terms of biological role, synthesizes alpha-1,4-glucan chains using ADP-glucose. The protein is Glycogen synthase of Bacillus anthracis.